The primary structure comprises 327 residues: Tagatose 1,6-diphosphate aldolase 2 (327 aa).

This sequence belongs to the aldolase LacD family.

The enzyme catalyses D-tagatofuranose 1,6-bisphosphate = D-glyceraldehyde 3-phosphate + dihydroxyacetone phosphate. It participates in carbohydrate metabolism; D-tagatose 6-phosphate degradation; D-glyceraldehyde 3-phosphate and glycerone phosphate from D-tagatose 6-phosphate: step 2/2. The sequence is that of Tagatose 1,6-diphosphate aldolase 2 (lacD2) from Streptococcus pyogenes serotype M3 (strain ATCC BAA-595 / MGAS315).